Consider the following 390-residue polypeptide: 1-deoxy-D-xylulose 5-phosphate reductoisomerase (390 aa).

NADPH-binding residues include Thr10, Gly11, Ser12, Ile13, Ala36, Lys37, Asn38, and Asn122. Residue Lys123 coordinates 1-deoxy-D-xylulose 5-phosphate. Glu124 serves as a coordination point for NADPH. Residue Asp148 participates in Mn(2+) binding. 1-deoxy-D-xylulose 5-phosphate is bound by residues Ser149, Glu150, Ser174, and His197. Glu150 is a binding site for Mn(2+). Gly203 contributes to the NADPH binding site. The 1-deoxy-D-xylulose 5-phosphate site is built by Ser210, Asn215, Lys216, and Glu219. Glu219 lines the Mn(2+) pocket.

It belongs to the DXR family. Mg(2+) serves as cofactor. Mn(2+) is required as a cofactor.

It catalyses the reaction 2-C-methyl-D-erythritol 4-phosphate + NADP(+) = 1-deoxy-D-xylulose 5-phosphate + NADPH + H(+). It functions in the pathway isoprenoid biosynthesis; isopentenyl diphosphate biosynthesis via DXP pathway; isopentenyl diphosphate from 1-deoxy-D-xylulose 5-phosphate: step 1/6. Catalyzes the NADPH-dependent rearrangement and reduction of 1-deoxy-D-xylulose-5-phosphate (DXP) to 2-C-methyl-D-erythritol 4-phosphate (MEP). The protein is 1-deoxy-D-xylulose 5-phosphate reductoisomerase of Trichlorobacter lovleyi (strain ATCC BAA-1151 / DSM 17278 / SZ) (Geobacter lovleyi).